A 729-amino-acid chain; its full sequence is Polyribonucleotide nucleotidyltransferase (729 aa).

Residues Tyr-399–Pro-419 are disordered. Asp-509 and Asp-515 together coordinate Mg(2+). Residues Pro-575 to Ile-634 form the KH domain. The S1 motif domain maps to Gly-646–Gly-718.

It belongs to the polyribonucleotide nucleotidyltransferase family. Requires Mg(2+) as cofactor.

It localises to the cytoplasm. The enzyme catalyses RNA(n+1) + phosphate = RNA(n) + a ribonucleoside 5'-diphosphate. Functionally, involved in mRNA degradation. Catalyzes the phosphorolysis of single-stranded polyribonucleotides processively in the 3'- to 5'-direction. The protein is Polyribonucleotide nucleotidyltransferase of Parafrankia sp. (strain EAN1pec).